Reading from the N-terminus, the 1295-residue chain is Phosphoribosylformylglycinamidine synthase (1295 aa).

The disordered stretch occupies residues 305 to 327 (WPGAATGSGGEIRDEGATGRGAK). Residues 307-318 (GAATGSGGEIRD) and Ala678 contribute to the ATP site. Mg(2+) contacts are provided by Glu718, Asn722, and Asp884. Ser886 lines the ATP pocket. Residues 1042–1295 (VAVLREQGVN…IFRNARKQLG (254 aa)) enclose the Glutamine amidotransferase type-1 domain. Cys1135 functions as the Nucleophile in the catalytic mechanism. Catalysis depends on residues His1260 and Glu1262.

The protein in the N-terminal section; belongs to the FGAMS family. As to quaternary structure, monomer.

The protein localises to the cytoplasm. It catalyses the reaction N(2)-formyl-N(1)-(5-phospho-beta-D-ribosyl)glycinamide + L-glutamine + ATP + H2O = 2-formamido-N(1)-(5-O-phospho-beta-D-ribosyl)acetamidine + L-glutamate + ADP + phosphate + H(+). The protein operates within purine metabolism; IMP biosynthesis via de novo pathway; 5-amino-1-(5-phospho-D-ribosyl)imidazole from N(2)-formyl-N(1)-(5-phospho-D-ribosyl)glycinamide: step 1/2. Functionally, phosphoribosylformylglycinamidine synthase involved in the purines biosynthetic pathway. Catalyzes the ATP-dependent conversion of formylglycinamide ribonucleotide (FGAR) and glutamine to yield formylglycinamidine ribonucleotide (FGAM) and glutamate. This is Phosphoribosylformylglycinamidine synthase from Escherichia coli (strain UTI89 / UPEC).